Consider the following 190-residue polypeptide: Elongation factor P-like protein (190 aa).

It belongs to the elongation factor P family.

The polypeptide is Elongation factor P-like protein (Yersinia pestis bv. Antiqua (strain Antiqua)).